We begin with the raw amino-acid sequence, 369 residues long: NAD(P)H-quinone oxidoreductase subunit 1, chloroplastic (369 aa).

The next 5 helical transmembrane spans lie at 25–45 (FGFI…TIGI), 104–124 (VMVV…HGII), 130–150 (IGVF…LTAG), 270–290 (LSAT…LFLP), and 306–326 (VISI…FLFI).

The protein belongs to the complex I subunit 1 family. In terms of assembly, NDH is composed of at least 16 different subunits, 5 of which are encoded in the nucleus.

The protein resides in the plastid. The protein localises to the chloroplast thylakoid membrane. The enzyme catalyses a plastoquinone + NADH + (n+1) H(+)(in) = a plastoquinol + NAD(+) + n H(+)(out). The catalysed reaction is a plastoquinone + NADPH + (n+1) H(+)(in) = a plastoquinol + NADP(+) + n H(+)(out). Functionally, NDH shuttles electrons from NAD(P)H:plastoquinone, via FMN and iron-sulfur (Fe-S) centers, to quinones in the photosynthetic chain and possibly in a chloroplast respiratory chain. The immediate electron acceptor for the enzyme in this species is believed to be plastoquinone. Couples the redox reaction to proton translocation, and thus conserves the redox energy in a proton gradient. In Huperzia lucidula (Shining clubmoss), this protein is NAD(P)H-quinone oxidoreductase subunit 1, chloroplastic.